We begin with the raw amino-acid sequence, 211 residues long: Thiamine-phosphate synthase (211 aa).

4-amino-2-methyl-5-(diphosphooxymethyl)pyrimidine-binding positions include 35 to 39 (QLRDK) and asparagine 67. Aspartate 68 and aspartate 87 together coordinate Mg(2+). Serine 106 lines the 4-amino-2-methyl-5-(diphosphooxymethyl)pyrimidine pocket. Position 132 to 134 (132 to 134 (TGS)) interacts with 2-[(2R,5Z)-2-carboxy-4-methylthiazol-5(2H)-ylidene]ethyl phosphate. Lysine 135 is a binding site for 4-amino-2-methyl-5-(diphosphooxymethyl)pyrimidine. 2-[(2R,5Z)-2-carboxy-4-methylthiazol-5(2H)-ylidene]ethyl phosphate is bound by residues glycine 163 and 183–184 (IS).

This sequence belongs to the thiamine-phosphate synthase family. It depends on Mg(2+) as a cofactor.

It catalyses the reaction 2-[(2R,5Z)-2-carboxy-4-methylthiazol-5(2H)-ylidene]ethyl phosphate + 4-amino-2-methyl-5-(diphosphooxymethyl)pyrimidine + 2 H(+) = thiamine phosphate + CO2 + diphosphate. The catalysed reaction is 2-(2-carboxy-4-methylthiazol-5-yl)ethyl phosphate + 4-amino-2-methyl-5-(diphosphooxymethyl)pyrimidine + 2 H(+) = thiamine phosphate + CO2 + diphosphate. The enzyme catalyses 4-methyl-5-(2-phosphooxyethyl)-thiazole + 4-amino-2-methyl-5-(diphosphooxymethyl)pyrimidine + H(+) = thiamine phosphate + diphosphate. Its pathway is cofactor biosynthesis; thiamine diphosphate biosynthesis; thiamine phosphate from 4-amino-2-methyl-5-diphosphomethylpyrimidine and 4-methyl-5-(2-phosphoethyl)-thiazole: step 1/1. Its function is as follows. Condenses 4-methyl-5-(beta-hydroxyethyl)thiazole monophosphate (THZ-P) and 2-methyl-4-amino-5-hydroxymethyl pyrimidine pyrophosphate (HMP-PP) to form thiamine monophosphate (TMP). The chain is Thiamine-phosphate synthase from Methanoculleus marisnigri (strain ATCC 35101 / DSM 1498 / JR1).